Here is a 1390-residue protein sequence, read N- to C-terminus: Contactin (1390 aa).

The first 18 residues, 1-18 (MLAKIGLLASILVLNLVG), serve as a signal peptide directing secretion. Positions 25–67 (SENLPDPDPQSGQQPQNYQPSYNKDYSPRYNPLYTGQQSADPN) are disordered. Polar residues predominate over residues 58–67 (YTGQQSADPN). Ig-like C2-type domains follow at residues 362 to 463 (PYFV…AHLN), 468 to 561 (MEFN…LRVT), 576 to 656 (PKVF…IYIN), 661 to 745 (PQFT…TSFS), 756 to 843 (PSFK…ARVI), and 848 to 939 (IRFI…TSVS). The N-linked (GlcNAc...) asparagine glycan is linked to Asn369. 4 cysteine pairs are disulfide-bonded: Cys388–Cys446, Cys489–Cys540, Cys593–Cys640, and Cys682–Cys734. Asn537, Asn604, Asn629, Asn691, and Asn774 each carry an N-linked (GlcNAc...) asparagine glycan. 2 cysteine pairs are disulfide-bonded: Cys779/Cys827 and Cys870/Cys923. Residues Asn912, Asn986, and Asn991 are each glycosylated (N-linked (GlcNAc...) asparagine). Fibronectin type-III domains are found at residues 946–1048 (APGG…TYED), 1053–1151 (APRN…SAED), 1156–1254 (APQK…TYRK), and 1259–1357 (PPSS…MGKT). Asn1166, Asn1171, and Asn1307 each carry an N-linked (GlcNAc...) asparagine glycan. Ala1362 carries the GPI-anchor amidated alanine lipid modification. A propeptide spans 1363–1390 (NTRHGHNINTALILSTLLLISTFLYTSQ) (removed in mature form).

It belongs to the immunoglobulin superfamily. Contactin family. As to quaternary structure, forms a complex with Nrg and Nrx. Forms a complex composed of septa junction proteins Nrx-IV/Nrx, Tsf2/MTf, Cont and Nrg during late embryogenesis. In terms of processing, N-glycosylated. Expressed in ectodermally derived epithelial cells from stage 12. All these tissues, such as epidermis, hindgut, foregut, salivary glands and trachea, which contain pleated septate junctions. Expressed by ectodermally derived epithelial cells and along peripheral nerves. Not present in midline glial cells. Expressed in epithelial cells and glial cells of peripheral nerves.

Its subcellular location is the cell membrane. The protein resides in the cell junction. It localises to the septate junction. Its function is as follows. Required for organization of septate junctions and paracellular barrier functions. Septate junctions, which are the equivalent of vertebrates tight junctions, are characterized by regular arrays of transverse structures that span the intermembrane space and form a physical barrier to diffusion. The protein is Contactin (Cont) of Drosophila melanogaster (Fruit fly).